The sequence spans 509 residues: Lysine--tRNA ligase (509 aa).

Positions 1 to 18 (MSEQNPTQAAKQAPQQEL) are enriched in polar residues. The segment at 1–20 (MSEQNPTQAAKQAPQQELND) is disordered. Mg(2+) is bound by residues E418 and E425.

Belongs to the class-II aminoacyl-tRNA synthetase family. As to quaternary structure, homodimer. It depends on Mg(2+) as a cofactor.

Its subcellular location is the cytoplasm. The enzyme catalyses tRNA(Lys) + L-lysine + ATP = L-lysyl-tRNA(Lys) + AMP + diphosphate. The polypeptide is Lysine--tRNA ligase (Psychromonas ingrahamii (strain DSM 17664 / CCUG 51855 / 37)).